We begin with the raw amino-acid sequence, 21 residues long: VIGGDECNINEHRSLVAIFDS.

It belongs to the peptidase S1 family. Snake venom subfamily. In terms of assembly, monomer. Expressed by the venom gland.

Its subcellular location is the secreted. Its activity is regulated as follows. Inhibited by PMSF, bovine aprotinin (APR), and soybean trypsin inhibitor (STI). Is not inhibited by EDTA, beta-mercaptoethanol, and high temperature (85 degrees Celsius). Functionally, snake venom serine protease that completely cleaves fibrinogen Aalpha chain (FGA), partially cleaves Bbeta chain (FGB) and has no activity on gamma chain. Is more potent that A2 and A3 alpha-fibrinogenases. Very active within 5 minutes. In Crotalus atrox (Western diamondback rattlesnake), this protein is Alpha-fibrinogenase A1.